The following is a 129-amino-acid chain: Cytochrome c oxidase subunit 13, mitochondrial (129 aa).

Residues 1–9 (MFRQCAKRY) constitute a mitochondrion transit peptide. The Mitochondrial matrix segment spans residues 10-43 (ASSLPPNALKPAFGPPDKVAAQKFKESLMATEKH). A helical membrane pass occupies residues 44–71 (AKDTSNMWVKISVWVALPAIALTAVNTY). Over 72-129 (FVEKEHAEHREHLKHVPDSEWPRDYEFMNIRSKPFFWGDGDKTLFWNPVVNRHIEHDD) the chain is Mitochondrial intermembrane.

Belongs to the cytochrome c oxidase subunit 6A family. Component of the cytochrome c oxidase (complex IV, CIV), a multisubunit enzyme composed of 12 subunits. The complex is composed of a catalytic core of 3 subunits COX1, COX2 and COX3, encoded in the mitochondrial DNA, and 9 supernumerary subunits COX4, COX5A (or COX5B), COX6, COX7, COX8, COX9, COX12, COX13 and COX26, which are encoded in the nuclear genome. The complex exists as a monomer or a dimer and forms supercomplexes (SCs) in the inner mitochondrial membrane with a dimer of ubiquinol-cytochrome c oxidoreductase (cytochrome b-c1 complex, complex III, CIII), resulting in 2 different assemblies (supercomplexes III(2)IV and III(2)IV(2)). COX13 interacts with COX1 and COX3 on the intermembrane space (IMS) and COX4 on the matrix side.

Its subcellular location is the mitochondrion inner membrane. It functions in the pathway energy metabolism; oxidative phosphorylation. Component of the cytochrome c oxidase, the last enzyme in the mitochondrial electron transport chain which drives oxidative phosphorylation. The respiratory chain contains 3 multisubunit complexes succinate dehydrogenase (complex II, CII), ubiquinol-cytochrome c oxidoreductase (cytochrome b-c1 complex, complex III, CIII) and cytochrome c oxidase (complex IV, CIV), that cooperate to transfer electrons derived from NADH and succinate to molecular oxygen, creating an electrochemical gradient over the inner membrane that drives transmembrane transport and the ATP synthase. Cytochrome c oxidase is the component of the respiratory chain that catalyzes the reduction of oxygen to water. Electrons originating from reduced cytochrome c in the intermembrane space (IMS) are transferred via the dinuclear copper A center (CU(A)) of COX2 and heme A of COX1 to the active site in COX1, a binuclear center (BNC) formed by heme A3 and copper B (CU(B)). The BNC reduces molecular oxygen to 2 water molecules using 4 electrons from cytochrome c in the IMS and 4 protons from the mitochondrial matrix. The chain is Cytochrome c oxidase subunit 13, mitochondrial (COX13) from Saccharomyces cerevisiae (strain ATCC 204508 / S288c) (Baker's yeast).